The primary structure comprises 686 residues: Tripartite terminase subunit 3 (686 aa).

The Walker A motif signature appears at 220–227; that stretch reads IPRRHGKT. Positions 315–320 match the Walker B motif motif; that stretch reads LLFVDE. E320 functions as the For ATPase activity in the catalytic mechanism. Active-site for nuclease activity residues include D474, E546, and D658.

It belongs to the herpesviridae TRM3 protein family. As to quaternary structure, interacts with the terminase subunits TRM1 and TRM2. Interacts with portal protein.

The protein resides in the host nucleus. Its function is as follows. Component of the molecular motor that translocates viral genomic DNA in empty capsid during DNA packaging. Forms a tripartite terminase complex together with TRM1 and TRM2 in the host cytoplasm. Once the complex reaches the host nucleus, it interacts with the capsid portal vertex. This portal forms a ring in which genomic DNA is translocated into the capsid. TRM3 carries an RNase H-like nuclease activity that plays an important role for the cleavage of concatemeric viral DNA into unit length genomes. This chain is Tripartite terminase subunit 3, found in Alcelaphine herpesvirus 1 (strain C500) (AlHV-1).